A 304-amino-acid chain; its full sequence is MNLMLCCTPLQVLIARKIIELHPNEQFFGVMFGGVWDKKRTLYASKLAEVCSDSMNIDTGKDLKGFDFLKLMRQLKNKITHKGFDKVFLANLNSLWLQTYLSHVSFKELYTFDDGSDNIFPHPNLLREPGTFKYKLIKAFIGDKYSVNKLFKKIKKHYTVYPNYKNIVSNIEPISLWDNQIDCEIDGEVSFFIGQPLLNTKEENISLIKKLKDQIPFDYYFPHPAEDYRVDGVNYVESELIFEDYVFKHLSNKKIIIYTFFSSVAFNLLSHPNVEIRFIRTSIPRWQFCYDSFPDLGLTIYKEI.

Residues 221–225 (FPHPA), 242–243 (FE), and 262–263 (SS) each bind CMP-N-acetyl-beta-neuraminate. The active-site Proton donor is the His-223.

It belongs to the glycosyltransferase 52 family.

The catalysed reaction is a beta-D-galactosyl-(1-&gt;4)-N-acetyl-beta-D-glucosaminyl derivative + CMP-N-acetyl-beta-neuraminate = an N-acetyl-alpha-neuraminyl-(2-&gt;3)-beta-D-galactosyl-(1-&gt;4)-N-acetyl-beta-D-glucosaminyl derivative + CMP + H(+). The protein operates within bacterial outer membrane biogenesis; lipooligosaccharide biosynthesis. In terms of biological role, catalyzes the transfer of sialic acid from the substrate CMP-N-acetylneuraminate to the terminal galactose residue of the N-acetyllactosamine moiety of surface lipooligosaccharide (LOS). Thus, functions in the sialylation of LOS, which plays a role in the evasion of the host immune response. The polypeptide is N-acetyllactosaminide alpha-2,3-sialyltransferase (Haemophilus influenzae (strain ATCC 51907 / DSM 11121 / KW20 / Rd)).